Consider the following 532-residue polypeptide: MAPSSPRPALPALLVLLGALFPGPGNAQTSVSPPKVILPRGGSVQVTCSTSCDQPDLLGIETPLPKKELLLGGNNWKVYELSNVQEDSQPMCYSNCPDGQSTAKTFLTVYWTPERVELAPLPSWQPVGKDLTLRCQVEGGAPRANLTVVLLRGEKELKREPAVGEPAEVTTTVLVERDHHGANFSCRTELDLRPQGLQLFENTSAPHQLQTFVLPATPPQLVSPRVLEVDTQGTVVCSLDGLFPVLEAQVHLALGDQRLNPTVTYGNDSFSAKASVSVTAEDEGTQRLMCAVILGNQSRETLQTVTIYSFPAPNVILTKPEVSEGTEVTVKCEAHPRAKVTLNGVPAQPVGPRVQLLLKATPEDNGRSFSCSATLEVAGQLIHKNQTRELRVLYGPRLDERDCPGNWTWPENSQQTPMCQASGNPLPELKCLKDGTFPLPVGESVTVTRDLEGTYLCRARSTQGEVTRKVTVNVLSPRYEIVIITVVAAAVIMGTAGLSTYLYNRQRKIRKYRLQQAQKGTPMKPNTQATPP.

The N-terminal stretch at methionine 1 to alanine 27 is a signal peptide. Residues glutamine 28–glutamate 480 lie on the Extracellular side of the membrane. Ig-like C2-type domains are found at residues glycine 41–alanine 103 and glycine 128–arginine 193. Cystine bridges form between cysteine 48/cysteine 92, cysteine 52/cysteine 96, and cysteine 135/cysteine 186. Asparagine 145 carries N-linked (GlcNAc...) asparagine glycosylation. The Cell attachment site; atypical signature appears at arginine 152–glutamate 154. Asparagine 183, asparagine 202, asparagine 267, and asparagine 296 each carry an N-linked (GlcNAc...) asparagine glycan. 2 Ig-like C2-type domains span residues aspartate 230–glutamine 297 and glycine 325–alanine 378. An intrachain disulfide couples cysteine 237 to cysteine 290. Cysteine 332 and cysteine 371 are joined by a disulfide. N-linked (GlcNAc...) asparagine glycosylation is found at asparagine 385 and asparagine 406. 3 cysteine pairs are disulfide-bonded: cysteine 403/cysteine 419, cysteine 419/cysteine 457, and cysteine 431/cysteine 457. Residues asparagine 412–glycine 464 enclose the Ig-like C2-type 5 domain. A helical membrane pass occupies residues isoleucine 481–tyrosine 503. Residues asparagine 504–proline 532 are Cytoplasmic-facing. Phosphothreonine is present on residues threonine 521 and threonine 530.

The protein belongs to the immunoglobulin superfamily. ICAM family. Homodimer. Interacts with MUC1 and promotes cell aggregation in epithelial cells. Interacts with ARHGEF26/SGEF. Interacts (on T cell side) with CD81, CD247 and CD9 at immunological synapses between antigen-presenting cells and T cells. In terms of processing, monoubiquitinated, which is promoted by MARCH9 and leads to endocytosis.

The protein localises to the membrane. In terms of biological role, ICAM proteins are ligands for the leukocyte adhesion protein LFA-1 (integrin alpha-L/beta-2). During leukocyte trans-endothelial migration, ICAM1 engagement promotes the assembly of endothelial apical cups through ARHGEF26/SGEF and RHOG activation. The chain is Intercellular adhesion molecule 1 (ICAM1) from Pan paniscus (Pygmy chimpanzee).